Reading from the N-terminus, the 88-residue chain is N(2)-fixation sustaining protein CowN (88 aa).

The protein belongs to the CowN family.

Is required to sustain N(2)-dependent growth in the presence of low levels of carbon monoxide (CO). Probably acts by protecting the N(2) fixation ability of the nitrogenase complex, which is inactivated in the presence of CO. The polypeptide is N(2)-fixation sustaining protein CowN (Rhodomicrobium vannielii (strain ATCC 17100 / DSM 162 / LMG 4299 / NCIMB 10020 / ATH 3.1.1)).